Reading from the N-terminus, the 348-residue chain is Spore development regulator vosA (348 aa).

A Velvet domain is found at 46–244; the sequence is ALSPSSCFLS…SDQGVRLRLR (199 aa). A disordered region spans residues 250–294; the sequence is MMSNKRSISGSGDLTSDQSQQQQQQQPLAKKRREDSVESANPSSL. Polar residues predominate over residues 253–266; sequence NKRSISGSGDLTSD. The Nuclear localization signal signature appears at 274-280; that stretch reads QQPLAKK.

Belongs to the velvet family. VosA subfamily. As to quaternary structure, forms a heterodimeric complex with VEL2; the formation of the VEL2-VOS1 complex is light-dependent.

It localises to the nucleus. Component of the velB-VosA heterodimeric complex that plays a dual role in activating genes associated with spore maturation and repressing certain development-associated genes. The complex binds DNA through the DNA-binding domain of vosA that recognizes an 11-nucleotide consensus sequence 5'-CTGGCCGCGGC-3' consisting of two motifs in the promoters of key developmental regulatory genes. Regulates spore viability, trehalose accumulation, and tolerance to thermal and oxidative as well as ion stresses. Positively regulates conidial pigmentation and pathogenicity on barley. The polypeptide is Spore development regulator vosA (Cochliobolus sativus (strain ND90Pr / ATCC 201652) (Common root rot and spot blotch fungus)).